The following is a 412-amino-acid chain: Short-chain specific acyl-CoA dehydrogenase, mitochondrial (412 aa).

The N-terminal 24 residues, 1 to 24, are a transit peptide targeting the mitochondrion; sequence MAAALLARARGPLRRALGVRDWRR. Thr27 carries the phosphothreonine modification. Lys51 is subject to N6-acetyllysine; alternate. Lys51 carries the N6-succinyllysine; alternate modification. Residue Lys72 is modified to N6-acetyllysine. At Lys129 the chain carries N6-acetyllysine; alternate. At Lys129 the chain carries N6-succinyllysine; alternate. FAD contacts are provided by residues 152–161 and 185–187; these read FALSEPGNGS and WIT. Residue Ser161 participates in substrate binding. Lys208 carries the post-translational modification N6-acetyllysine. The residue at position 262 (Lys262) is an N6-acetyllysine; alternate. An N6-succinyllysine; alternate modification is found at Lys262. Residue 269-272 coordinates substrate; sequence DMGR. An N6-acetyllysine modification is found at Lys292. Arg297 contacts FAD. The residue at position 306 (Lys306) is an N6-acetyllysine; alternate. Position 306 is an N6-succinyllysine; alternate (Lys306). FAD contacts are provided by residues Gln308 and 365 to 369; that span reads QILGG. Catalysis depends on Glu392, which acts as the Proton acceptor. Substrate is bound at residue Gly393. An FAD-binding site is contributed by 394–396; sequence TSE.

The protein belongs to the acyl-CoA dehydrogenase family. Homotetramer. FAD is required as a cofactor.

It is found in the mitochondrion matrix. The catalysed reaction is a short-chain 2,3-saturated fatty acyl-CoA + oxidized [electron-transfer flavoprotein] + H(+) = a short-chain (2E)-enoyl-CoA + reduced [electron-transfer flavoprotein]. The enzyme catalyses butanoyl-CoA + oxidized [electron-transfer flavoprotein] + H(+) = (2E)-butenoyl-CoA + reduced [electron-transfer flavoprotein]. It catalyses the reaction pentanoyl-CoA + oxidized [electron-transfer flavoprotein] + H(+) = (2E)-pentenoyl-CoA + reduced [electron-transfer flavoprotein]. It carries out the reaction hexanoyl-CoA + oxidized [electron-transfer flavoprotein] + H(+) = (2E)-hexenoyl-CoA + reduced [electron-transfer flavoprotein]. Its pathway is lipid metabolism; mitochondrial fatty acid beta-oxidation. Its function is as follows. Short-chain specific acyl-CoA dehydrogenase is one of the acyl-CoA dehydrogenases that catalyze the first step of mitochondrial fatty acid beta-oxidation, an aerobic process breaking down fatty acids into acetyl-CoA and allowing the production of energy from fats. The first step of fatty acid beta-oxidation consists in the removal of one hydrogen from C-2 and C-3 of the straight-chain fatty acyl-CoA thioester, resulting in the formation of trans-2-enoyl-CoA. Among the different mitochondrial acyl-CoA dehydrogenases, short-chain specific acyl-CoA dehydrogenase acts specifically on acyl-CoAs with saturated 4 to 6 carbons long primary chains. The polypeptide is Short-chain specific acyl-CoA dehydrogenase, mitochondrial (Acads) (Mus musculus (Mouse)).